The following is a 277-amino-acid chain: uncharacterized protein (277 aa).

This is an uncharacterized protein from Methanocaldococcus jannaschii (strain ATCC 43067 / DSM 2661 / JAL-1 / JCM 10045 / NBRC 100440) (Methanococcus jannaschii).